A 560-amino-acid polypeptide reads, in one-letter code: Membrane protein insertase YidC (560 aa).

Helical transmembrane passes span 5 to 25 (IINL…WQYF), 334 to 354 (AIDF…MNFF), 357 to 377 (YVGN…LLMF), 431 to 451 (LPIL…YVTI), 476 to 496 (LFGL…WPIL), and 522 to 542 (FMPL…LIYW).

Belongs to the OXA1/ALB3/YidC family. Type 1 subfamily. Interacts with the Sec translocase complex via SecD. Specifically interacts with transmembrane segments of nascent integral membrane proteins during membrane integration.

It is found in the cell inner membrane. In terms of biological role, required for the insertion and/or proper folding and/or complex formation of integral membrane proteins into the membrane. Involved in integration of membrane proteins that insert both dependently and independently of the Sec translocase complex, as well as at least some lipoproteins. Aids folding of multispanning membrane proteins. The sequence is that of Membrane protein insertase YidC from Rickettsia prowazekii (strain Madrid E).